We begin with the raw amino-acid sequence, 304 residues long: Homoserine kinase (304 aa).

An ATP-binding site is contributed by 90–100 (PLARGLGSSAS).

It belongs to the GHMP kinase family. Homoserine kinase subfamily.

The protein resides in the cytoplasm. It carries out the reaction L-homoserine + ATP = O-phospho-L-homoserine + ADP + H(+). Its pathway is amino-acid biosynthesis; L-threonine biosynthesis; L-threonine from L-aspartate: step 4/5. In terms of biological role, catalyzes the ATP-dependent phosphorylation of L-homoserine to L-homoserine phosphate. The sequence is that of Homoserine kinase from Staphylococcus aureus (strain NCTC 8325 / PS 47).